Reading from the N-terminus, the 235-residue chain is Phosphoribosylaminoimidazole-succinocarboxamide synthase (235 aa).

Belongs to the SAICAR synthetase family.

It carries out the reaction 5-amino-1-(5-phospho-D-ribosyl)imidazole-4-carboxylate + L-aspartate + ATP = (2S)-2-[5-amino-1-(5-phospho-beta-D-ribosyl)imidazole-4-carboxamido]succinate + ADP + phosphate + 2 H(+). Its pathway is purine metabolism; IMP biosynthesis via de novo pathway; 5-amino-1-(5-phospho-D-ribosyl)imidazole-4-carboxamide from 5-amino-1-(5-phospho-D-ribosyl)imidazole-4-carboxylate: step 1/2. In Thermoanaerobacter pseudethanolicus (strain ATCC 33223 / 39E) (Clostridium thermohydrosulfuricum), this protein is Phosphoribosylaminoimidazole-succinocarboxamide synthase.